The following is a 512-amino-acid chain: Hyaluronidase PH-20 (512 aa).

The N-terminal stretch at 1–35 (MGELRFKHLFWGSFVESGGTFQTVLIFLLIPCSLT) is a signal peptide. Asn-46 is a glycosylation site (N-linked (GlcNAc...) asparagine). Cystine bridges form between Cys-60–Cys-351 and Cys-223–Cys-237. Glu-147 (proton donor) is an active-site residue. An N-linked (GlcNAc...) asparagine glycan is attached at Asn-165. Residues Asn-293 and Asn-368 are each glycosylated (N-linked (GlcNAc...) asparagine). 3 disulfide bridges follow: Cys-376-Cys-387, Cys-381-Cys-435, and Cys-437-Cys-464.

Belongs to the glycosyl hydrolase 56 family.

The protein resides in the cell membrane. The enzyme catalyses Random hydrolysis of (1-&gt;4)-linkages between N-acetyl-beta-D-glucosamine and D-glucuronate residues in hyaluronate.. Its function is as follows. Involved in sperm-egg adhesion. Upon fertilization sperm must first penetrate a layer of cumulus cells that surrounds the egg before reaching the zona pellucida. The cumulus cells are embedded in a matrix containing hyaluronic acid which is formed prior to ovulation. This protein aids in penetrating the layer of cumulus cells by digesting hyaluronic acid. The protein is Hyaluronidase PH-20 (Spam1) of Mus musculus (Mouse).